Reading from the N-terminus, the 150-residue chain is MEKRKDTKTTIAKASEAQNKSWYVIDAAGKTLGRLSSEVAKILRGKHKVTYTPHVAMGDGVIVINAEKVHLTGAKKGQKIYRYYTGYISGMREVAFENMIAKKPSYIIEHAIKGMMPKTRLGKRQVKSLRILKGDYYQEFKSQKPIVLDV.

Belongs to the universal ribosomal protein uL13 family. Part of the 50S ribosomal subunit.

Its function is as follows. This protein is one of the early assembly proteins of the 50S ribosomal subunit, although it is not seen to bind rRNA by itself. It is important during the early stages of 50S assembly. The polypeptide is Large ribosomal subunit protein uL13 (Chlamydia abortus (strain DSM 27085 / S26/3) (Chlamydophila abortus)).